The sequence spans 724 residues: Solute carrier organic anion transporter family member 4C1 (724 aa).

Residues 1-105 lie on the Cytoplasmic side of the membrane; the sequence is MKSAKGIENL…QCLQRCNTPG (105 aa). Ser15, Ser16, Ser24, Ser26, and Ser28 each carry phosphoserine. A disordered region spans residues 30 to 71; sequence IEVSALSSDPQRENSQPQELQKPQEPQKSPEPSLPSAPPNVS. A compositionally biased stretch (low complexity) spans 44 to 60; the sequence is SQPQELQKPQEPQKSPE. Residues 106–126 traverse the membrane as a helical segment; it reads GFLLHYCLLAVTQGIVVNGLV. At 127–145 the chain is on the extracellular side; sequence NISISTVEKRYEMKSSLTG. The chain crosses the membrane as a helical span at residues 146-166; the sequence is LISSSYDISFCLLSLFVSFFG. Topologically, residues 167–172 are cytoplasmic; that stretch reads ERGHKP. The chain crosses the membrane as a helical span at residues 173 to 197; sequence RWLAFAAFMIGLGALVFSLPQFFSG. Topologically, residues 198–223 are extracellular; sequence EYKLGSLFEDTCVTTRNSTSCTSSTS. The helical transmembrane segment at 224–254 threads the bilayer; the sequence is SLSNYLYVFILGQLLLGAGGTPLYTLGTAFL. Residues 255-274 lie on the Cytoplasmic side of the membrane; that stretch reads DDSVPTHKSSLYIGTGYAMS. A helical transmembrane segment spans residues 275 to 295; that stretch reads ILGPAIGYVLGGQLLTIYIDV. Topologically, residues 296–311 are extracellular; sequence AMGESTDVTEDDPRWL. The helical transmembrane segment at 312–336 threads the bilayer; it reads GAWWIGFLLSWIFAWSLIIPFSCFP. Over 337–377 the chain is Cytoplasmic; the sequence is KHLPGTAEIQAGKTSQAHQSNSNADVKFGKSIKDFPAALKN. Residues 378–399 traverse the membrane as a helical segment; sequence LMKNAVFMCLVLSTSSEALITT. The Extracellular portion of the chain corresponds to 400-419; the sequence is GFATFLPKFIENQFGLTSSF. The chain crosses the membrane as a helical span at residues 420 to 443; that stretch reads AATLGGAVLIPGAALGQILGGFLV. Residues 444-447 lie on the Cytoplasmic side of the membrane; sequence SKFR. Residues 448–471 form a helical membrane-spanning segment; that stretch reads MTCKNTMKFALFTSGVALTLSFVF. Topologically, residues 472-580 are extracellular; the sequence is MYAKCENEPF…ETHCAKLPIF (109 aa). The 55-residue stretch at 495 to 549 folds into the Kazal-like domain; sequence GNLIAPCNANCNCSRSYYYPVCGDGVQYFSPCFAGCSNPVAHRKPKVYYNCSCIE. Cystine bridges form between Cys501/Cys530, Cys507/Cys526, and Cys516/Cys547. A helical membrane pass occupies residues 581-603; the sequence is LCIFFIVIIFTFMAGTPITVSIL. Residues 604–612 are Cytoplasmic-facing; sequence RCVNHRQRS. The helical transmembrane segment at 613-638 threads the bilayer; it reads LALGIQFMVLRLLGTIPGPIIFGFTI. The Extracellular segment spans residues 639–672; that stretch reads DSTCILWDINDCGIKGACWIYDNIKMAHMLVAIS. A helical transmembrane segment spans residues 673-690; the sequence is VTCKVITMFFNGFAIFLY. The Cytoplasmic portion of the chain corresponds to 691 to 724; it reads KPPPSATDVSFHKENAVVTNVLAEQDLNKIVKEG.

Belongs to the organo anion transporter (TC 2.A.60) family. In terms of tissue distribution, predominantly expressed in kidney but also weakly expressed in both fetal liver and kidney.

The protein localises to the basolateral cell membrane. The catalysed reaction is estrone 3-sulfate(out) = estrone 3-sulfate(in). It carries out the reaction L-thyroxine(out) = L-thyroxine(in). It catalyses the reaction 3,3',5-triiodo-L-thyronine(out) = 3,3',5-triiodo-L-thyronine(in). The enzyme catalyses chenodeoxycholate(out) = chenodeoxycholate(in). The catalysed reaction is glycocholate(out) = glycocholate(in). It carries out the reaction L-homoarginine(in) = L-homoarginine(out). It catalyses the reaction L-arginine(in) = L-arginine(out). The enzyme catalyses N(omega),N(omega)-dimethyl-L-arginine(out) = N(omega),N(omega)-dimethyl-L-arginine(in). In terms of biological role, mediates the transport of organic anions such as steroids (estrone 3-sulfate, chenodeoxycholate, glycocholate) and thyroid hormones (3,3',5-triiodo-L-thyronine (T3), L-thyroxine (T4)), in the kidney. Capable of transporting cAMP and pharmacological substances such as digoxin, ouabain and methotrexate. Transport is independent of sodium, chloride ion, and ATP. Transport activity is stimulated by an acidic extracellular environment due to increased substrate affinity to the transporter. The driving force for this transport activity is currently not known. The role of hydrogencarbonate (HCO3(-), bicarbonate) as the probable counteranion that exchanges for organic anions is still not well defined. Functions as an uptake transporter at the apical membrane, suggesting a role in renal reabsorption. Involved in the renal secretion of the uremic toxin ADMA (N(omega),N(omega)-dimethyl-L-arginine or asymmetrical dimethylarginine), which is associated to cardiovascular events and mortality, and the structurally related amino acids L-arginine and L-homoarginine (a cardioprotective biomarker). Can act bidirectionally, suggesting a dual protective role of this transport protein; exporting L-homoarginine after being synthesized in proximal tubule cells, and mediating uptake of ADMA from the blood into proximal tubule cells where it is degraded by the enzyme dimethylarginine dimethylaminohydrolase 1 (DDAH1). May be involved in sperm maturation by enabling directed movement of organic anions and compounds within or between cells. This ion-transporting process is important to maintain the strict epididymal homeostasis necessary for sperm maturation. May have a role in secretory functions since seminal vesicle epithelial cells are assumed to secrete proteins involved in decapacitation by modifying surface proteins to facilitate the acquisition of the ability to fertilize the egg. The sequence is that of Solute carrier organic anion transporter family member 4C1 from Homo sapiens (Human).